Reading from the N-terminus, the 338-residue chain is DNA-directed RNA polymerase subunit alpha (338 aa).

The alpha N-terminal domain (alpha-NTD) stretch occupies residues 1 to 234; it reads MIHKNWAELI…DQLSIFVNFE (234 aa). The interval 250–338 is alpha C-terminal domain (alpha-CTD); the sequence is FNPLLLKKVD…DLAKRFEDQF (89 aa).

This sequence belongs to the RNA polymerase alpha chain family. Homodimer. The RNAP catalytic core consists of 2 alpha, 1 beta, 1 beta' and 1 omega subunit. When a sigma factor is associated with the core the holoenzyme is formed, which can initiate transcription.

The enzyme catalyses RNA(n) + a ribonucleoside 5'-triphosphate = RNA(n+1) + diphosphate. In terms of biological role, DNA-dependent RNA polymerase catalyzes the transcription of DNA into RNA using the four ribonucleoside triphosphates as substrates. This Cereibacter sphaeroides (strain ATCC 17025 / ATH 2.4.3) (Rhodobacter sphaeroides) protein is DNA-directed RNA polymerase subunit alpha.